A 394-amino-acid chain; its full sequence is Protein maelstrom (394 aa).

The HMG box DNA-binding region spans 2–69 (APKKQNGFMM…ARRDKRGSLN (68 aa)). A disordered region spans residues 44 to 93 (TQQRGPYNSDAKDANAARRDKRGSLNGHGQVDKAQREAAESLMDKAQREA). Over residues 73–93 (QVDKAQREAAESLMDKAQREA) the composition is skewed to basic and acidic residues.

Belongs to the maelstrom family.

It localises to the cytoplasm. The protein localises to the nucleus. Involved both in the piRNA and miRNA metabolic processes. As a component of the meiotic nuage, plays a central role during oogenesis by repressing transposable elements and preventing their mobilization, which is essential for the germline integrity. Repression of transposable elements is mediated via the piRNA metabolic process, which mediates the repression of transposable elements during meiosis by forming complexes composed of piRNAs and Piwi proteins and governs the repression of transposons. As a nuclear component, it is required for proper differentiation in the germline stem cell (GSC) lineage by repressing microRNA-7 (miR-7), thereby acting as an indirect regulator of bag-of-marbles (Bam). Acts by binding to the promoter of miR-7 gene and repressing its expression; miR-7 repression alleviates the Bam repression by miR-7, thereby allowing differentiation in the germline stem cell (GSC) lineage. The protein is Protein maelstrom (mael) of Drosophila simulans (Fruit fly).